The following is an 884-amino-acid chain: Translation initiation factor IF-2 (884 aa).

The tract at residues 58–248 is disordered; the sequence is PEKVEQKRVR…GKTESVETEE (191 aa). Over residues 66 to 77 the composition is skewed to basic residues; the sequence is VRSNVIRKRRQP. The span at 87–106 shows a compositional bias: low complexity; it reads EAPAAQAPEAEEVTAPTAEE. The segment covering 172 to 183 has biased composition (basic residues); sequence SRKKAKAKKHQA. A compositionally biased stretch (low complexity) spans 207 to 223; the sequence is DTAPADSPAAPAAATPA. The span at 229-239 shows a compositional bias: basic residues; it reads KPSRKDRKKRG. Positions 384 to 553 constitute a tr-type G domain; the sequence is KRAPVVTIMG…LLQAEMLELK (170 aa). A G1 region spans residues 393-400; the sequence is GHVDHGKT. 393-400 is a binding site for GTP; the sequence is GHVDHGKT. A G2 region spans residues 418–422; that stretch reads GITQH. The interval 439–442 is G3; that stretch reads DTPG. Residues 439 to 443 and 493 to 496 contribute to the GTP site; these read DTPGH and NKID. Positions 493–496 are G4; that stretch reads NKID. The tract at residues 529 to 531 is G5; that stretch reads SAK.

It belongs to the TRAFAC class translation factor GTPase superfamily. Classic translation factor GTPase family. IF-2 subfamily.

It is found in the cytoplasm. Its function is as follows. One of the essential components for the initiation of protein synthesis. Protects formylmethionyl-tRNA from spontaneous hydrolysis and promotes its binding to the 30S ribosomal subunits. Also involved in the hydrolysis of GTP during the formation of the 70S ribosomal complex. The sequence is that of Translation initiation factor IF-2 from Desulfosudis oleivorans (strain DSM 6200 / JCM 39069 / Hxd3) (Desulfococcus oleovorans).